Reading from the N-terminus, the 307-residue chain is MIQSHVSVMLNEMLEALSPKAGESYLDCTFGAGGYSKAILESCNCYVTALDRDPNVIKRAEEIQQHYGERFDFVETNFADSFAKLKEKKFDGIVLDLGVSSMQLDIADRGFSFLHDGPLDMRMSGQGLSAEEFVNAAEEKELADVIYKYGDESFSRRIAKRIVEYRKTARIDSTSKLAEIVRSSIGFRKGKIDPATKTFQAIRIYVNDELGELEQFLVNVKNILKKDGRLVVVSFHSLEDRIVKNFFKENSEKPVVRSKYAKDDMTIDPNKWLKIITNKALAPSDKEVGLNIRARSAKLRAAKAIYE.

S-adenosyl-L-methionine contacts are provided by residues 33 to 35, Asp-51, Phe-78, Asp-96, and Gln-103; that span reads GGY.

This sequence belongs to the methyltransferase superfamily. RsmH family.

The protein localises to the cytoplasm. The enzyme catalyses cytidine(1402) in 16S rRNA + S-adenosyl-L-methionine = N(4)-methylcytidine(1402) in 16S rRNA + S-adenosyl-L-homocysteine + H(+). Specifically methylates the N4 position of cytidine in position 1402 (C1402) of 16S rRNA. The protein is Ribosomal RNA small subunit methyltransferase H of Rickettsia conorii (strain ATCC VR-613 / Malish 7).